The chain runs to 586 residues: Protein CBFA2T2 (586 aa).

The tract at residues 1 to 95 (MVGIPGPYQF…SSSSSLANQQ (95 aa)) is disordered. Residues 56–68 (SSHSNGINHSPPT) show a composition bias toward polar residues. Low complexity predominate over residues 77-90 (QRSSNGPSSSSSSS). One can recognise a TAFH domain in the interval 102–197 (VRQLSKLKRF…TPSQYLAQHE (96 aa)). 2 disordered regions span residues 204 to 242 (STSSPADSSELLMEMNGNGKRHSPDRREEERETAPAEPP) and 387 to 417 (IRKGSEHPSRQHSPSSTDSGASDSVRDFGSR). Basic and acidic residues predominate over residues 228 to 237 (DRREEERETA). The span at 399–409 (SPSSTDSGASD) shows a compositional bias: low complexity. Residues 429–481 (RKAEEAVNEVKRQAMSEVQKAVSEAEQKAFEMIASERARMEQTIVDAKRRAAE) adopt a coiled-coil conformation. The Zn(2+) site is built by cysteine 497, cysteine 500, cysteine 508, cysteine 511, cysteine 517, cysteine 521, histidine 529, and cysteine 533. The MYND-type zinc finger occupies 497-533 (CWNCGRKASETCSGCNIARYCGSFCQHKDWEKHHRIC). Residues 561–586 (SPTLERSSSATSRSSTPASVTAVDGL) form a disordered region. The span at 566–586 (RSSSATSRSSTPASVTAVDGL) shows a compositional bias: low complexity.

The protein resides in the nucleus. Functionally, may act as a transcriptional corepressor. This Xenopus laevis (African clawed frog) protein is Protein CBFA2T2 (cbfa2t2).